Reading from the N-terminus, the 368-residue chain is DNA replication and repair protein RecF (368 aa).

An ATP-binding site is contributed by 30-37 (GDNGAGKT).

Belongs to the RecF family.

The protein resides in the cytoplasm. Its function is as follows. The RecF protein is involved in DNA metabolism; it is required for DNA replication and normal SOS inducibility. RecF binds preferentially to single-stranded, linear DNA. It also seems to bind ATP. The chain is DNA replication and repair protein RecF from Xanthomonas axonopodis pv. citri (strain 306).